The sequence spans 557 residues: Nucleolin 1 (557 aa).

Disordered regions lie at residues 1 to 297, 376 to 398, and 474 to 557; these read MGKS…GGSK, GERG…GDGG, and LVVD…FGDE. A compositionally biased stretch (basic and acidic residues) spans 49–63; it reads QKEKAVKKVPKKVES. Composition is skewed to acidic residues over residues 64 to 74, 91 to 101, and 124 to 135; these read SDDSDSESEEE, ESSDDSSSDDE, and SSSDDDSSDEEV. Residues 174-184 are compositionally biased toward low complexity; sequence AKIAKPAAKDS. The segment covering 186-197 has biased composition (acidic residues); sequence SSDDDSDEDSED. Over residues 203-217 the composition is skewed to low complexity; the sequence is KKAAPAAAKAASSSD. The segment covering 218 to 229 has biased composition (acidic residues); sequence SSDEDSDEESED. Residues 230–247 are compositionally biased toward basic and acidic residues; the sequence is EKPAQKKADTKASKKSSS. Residues 249–263 show a composition bias toward acidic residues; sequence ESSESEEDESEDEEE. Residues 264-281 are compositionally biased toward basic and acidic residues; the sequence is TPKKKSSDVEMVDAEKSS. The RRM 1 domain occupies 297–374; sequence KTLFAANLSF…REIRLDIAQE (78 aa). In terms of domain architecture, RRM 2 spans 401-481; sequence KKIFVKGFDA…FYLVVDEPRP (81 aa). Positions 485–503 are enriched in gly residues; it reads SSGGGGFGRGNGRFGSGGG.

As to quaternary structure, interacts with THAL in the nucleus. In terms of tissue distribution, expressed in roots, leaves, shoots and flowers.

It is found in the nucleus. Its subcellular location is the nucleolus. In terms of biological role, involved in pre-rRNA processing and ribosome assembly. Is associated with intranucleolar chromatin and pre-ribosomal particles and plays a role in controlling activation and repression of a specific subset of rRNA genes located in distinctive nucleolar organizer regions. Binds specifically rDNA chromatin and may be required to maintain rDNA chromatin structure, but is probably not required for the overall histone methylation status of 45S rRNA genes. Involved in leaf polarity establishment by functioning cooperatively with AS1 to repress abaxial genes ARF3, ARF4, KAN1, KAN2, YAB1 and YAB5, and the knox homeobox genes KNAT1, KNAT2, KNAT6, and STM to promote adaxial development in leaf primordia at shoot apical meristems at high temperatures. The polypeptide is Nucleolin 1 (Arabidopsis thaliana (Mouse-ear cress)).